Reading from the N-terminus, the 229-residue chain is Urease accessory protein UreF (229 aa).

Belongs to the UreF family. In terms of assembly, ureD, UreF and UreG form a complex that acts as a GTP-hydrolysis-dependent molecular chaperone, activating the urease apoprotein by helping to assemble the nickel containing metallocenter of UreC. The UreE protein probably delivers the nickel.

It localises to the cytoplasm. Its function is as follows. Required for maturation of urease via the functional incorporation of the urease nickel metallocenter. The sequence is that of Urease accessory protein UreF from Staphylococcus aureus (strain MRSA252).